A 312-amino-acid chain; its full sequence is tRNA-dihydrouridine(16) synthase (312 aa).

FMN is bound by residues 7-9 and Gln68; that span reads PME. Cys98 acts as the Proton donor in catalysis. FMN is bound by residues Lys139, 200–202, and 224–225; these read NGE and GR.

Belongs to the Dus family. DusC subfamily. FMN serves as cofactor.

The enzyme catalyses 5,6-dihydrouridine(16) in tRNA + NADP(+) = uridine(16) in tRNA + NADPH + H(+). The catalysed reaction is 5,6-dihydrouridine(16) in tRNA + NAD(+) = uridine(16) in tRNA + NADH + H(+). Its function is as follows. Catalyzes the synthesis of 5,6-dihydrouridine (D), a modified base found in the D-loop of most tRNAs, via the reduction of the C5-C6 double bond in target uridines. Specifically modifies U16 in tRNAs. In Salmonella typhimurium (strain LT2 / SGSC1412 / ATCC 700720), this protein is tRNA-dihydrouridine(16) synthase.